The chain runs to 231 residues: Septum site-determining protein MinC (231 aa).

The protein belongs to the MinC family. Interacts with MinD and FtsZ.

In terms of biological role, cell division inhibitor that blocks the formation of polar Z ring septums. Rapidly oscillates between the poles of the cell to destabilize FtsZ filaments that have formed before they mature into polar Z rings. Prevents FtsZ polymerization. This is Septum site-determining protein MinC from Shigella flexneri.